Consider the following 155-residue polypeptide: Small ribosomal subunit protein uS7 (155 aa).

This sequence belongs to the universal ribosomal protein uS7 family. In terms of assembly, part of the 30S ribosomal subunit. Contacts proteins S9 and S11.

One of the primary rRNA binding proteins, it binds directly to 16S rRNA where it nucleates assembly of the head domain of the 30S subunit. Is located at the subunit interface close to the decoding center, probably blocks exit of the E-site tRNA. The sequence is that of Small ribosomal subunit protein uS7 from Lactococcus lactis subsp. lactis (strain IL1403) (Streptococcus lactis).